Here is a 648-residue protein sequence, read N- to C-terminus: MHLRDLTGPEQLKRLAPAELAQLAAEIRRVILETVATNGGHLAPNLGVVELTLALHIVFDSPRDKILWDVSHQSYVHKLLTGRLHQFHTLRQFGGIAGFTDPRESVHDHFHWGHASTSISAAVGMAKARDLAGDDYEVVAVIGDGALTGGMAYEALDHAGHDKTKVIVVLNDNSMSIAPNVGGISNYLARIRTGPSYQRVKHDVAEALRQIPLIGPQALELADRLKEGVKHLLVHNMFFEDLGFTYLGPVDGHNVSALVDVLRQARAYPGPTVVHVVTTKGKGVPYAEQLPDKFHGGGPFDVATGRTGPGSLTYSEVFGNVMCKLAAEDPRVCAITAAMPSGTGLSRFARQFPDRYFDVGIAEQHAVTFAAGLAKGGMRPVFAVYSTFLQRAYDQVIHDVALQNLPVTLAIDRGGLVEDGATHQGVFDVAYLRAIPNMVVMAPKDENELQHMLYTALCHDGPAALRYPRGKAQGVPLDETLQPLPIGRGEVMQEGADVALIGLGTMARVCQEAARLLAEKSISAMVINPRFVKPLDAELLLRAGREVGAVVTVEEACLAGGFGSAVLELYAAHGVNARVERMGIPDEFVDHGQPARYLERYGLTPEGVAQRAEALLLRMRSDLAAQPARRSRSVRRLSGAKAAGNGET.

Thiamine diphosphate-binding positions include His-72 and 113–115; that span reads GHA. A Mg(2+)-binding site is contributed by Asp-144. Thiamine diphosphate is bound by residues 145–146, Asn-173, and Glu-363; that span reads GA. Mg(2+) is bound at residue Asn-173.

This sequence belongs to the transketolase family. DXPS subfamily. In terms of assembly, homodimer. Mg(2+) is required as a cofactor. Thiamine diphosphate serves as cofactor.

The catalysed reaction is D-glyceraldehyde 3-phosphate + pyruvate + H(+) = 1-deoxy-D-xylulose 5-phosphate + CO2. Its pathway is metabolic intermediate biosynthesis; 1-deoxy-D-xylulose 5-phosphate biosynthesis; 1-deoxy-D-xylulose 5-phosphate from D-glyceraldehyde 3-phosphate and pyruvate: step 1/1. Functionally, catalyzes the acyloin condensation reaction between C atoms 2 and 3 of pyruvate and glyceraldehyde 3-phosphate to yield 1-deoxy-D-xylulose-5-phosphate (DXP). The sequence is that of 1-deoxy-D-xylulose-5-phosphate synthase from Symbiobacterium thermophilum (strain DSM 24528 / JCM 14929 / IAM 14863 / T).